The primary structure comprises 347 residues: Nicotinate-nucleotide--dimethylbenzimidazole phosphoribosyltransferase (347 aa).

The Proton acceptor role is filled by E316.

The protein belongs to the CobT family.

The enzyme catalyses 5,6-dimethylbenzimidazole + nicotinate beta-D-ribonucleotide = alpha-ribazole 5'-phosphate + nicotinate + H(+). Its pathway is nucleoside biosynthesis; alpha-ribazole biosynthesis; alpha-ribazole from 5,6-dimethylbenzimidazole: step 1/2. In terms of biological role, catalyzes the synthesis of alpha-ribazole-5'-phosphate from nicotinate mononucleotide (NAMN) and 5,6-dimethylbenzimidazole (DMB). This is Nicotinate-nucleotide--dimethylbenzimidazole phosphoribosyltransferase from Vibrio parahaemolyticus serotype O3:K6 (strain RIMD 2210633).